Consider the following 292-residue polypeptide: MGDYIVRMTAAQGTVRAFGAMTTEMVGQAAEIHGLSPIATAALGRTMTAAGMMSKMLKGENDKLTIQLKGDGPLGGIVVVSDSKANVRGYVHNPNVYLPLNERGKLDIRTAMGYGYINVIRDMGLKEPYIGLSQLVSGEIADDLTYYFATSEQVPSTVALGVLIDATGVIGAGGFIVQMMPGAEEETVATLEKRLIGFPSVSKLISEGTTPEQILNMLLEGMEPKIVETVPCSFKCNCTRERMERNLISIGKKDLLEIFEDGKGAELQCHFCNTKYNFSHQDIENIVKENVK.

Cystine bridges form between cysteine 236/cysteine 238 and cysteine 269/cysteine 272.

The protein belongs to the HSP33 family. Under oxidizing conditions two disulfide bonds are formed involving the reactive cysteines. Under reducing conditions zinc is bound to the reactive cysteines and the protein is inactive.

It is found in the cytoplasm. Redox regulated molecular chaperone. Protects both thermally unfolding and oxidatively damaged proteins from irreversible aggregation. Plays an important role in the bacterial defense system toward oxidative stress. The protein is 33 kDa chaperonin of Ruminiclostridium cellulolyticum (strain ATCC 35319 / DSM 5812 / JCM 6584 / H10) (Clostridium cellulolyticum).